The sequence spans 86 residues: CLAVATA3/ESR (CLE)-related protein 8 (86 aa).

A signal peptide spans 1-24 (MKVLKRDSMLLLITLYFLLTTSMA). The disordered stretch occupies residues 43–86 (DLKQNKAKPHLPNLFRTMRRVPTGPNPLHHISPPQPGSLNYARN). A hydroxyproline mark is found at Pro64 and Pro67. Pro67 is a glycosylation site (O-linked (Ara...) hydroxyproline).

It belongs to the CLV3/ESR signal peptide family. In terms of processing, the O-glycosylation (arabinosylation) of the hydroxyproline Pro-67 enhances binding affinity of the CLE8p peptide for its receptor. Mostly expressed in siliques, and, to a lower extent, in flowers. Expressed in young embryos and endosperm.

Its subcellular location is the secreted. It localises to the extracellular space. In terms of biological role, extracellular signal peptide that regulates cell fate. Represses root apical meristem maintenance. Positively regulates the expression of the transcription factor WOX8 and thus, regulates early embryo development. Regulates the transition of protophloem cells from proliferation to differentiation, thus impinging on postembryonic growth capacity of the root meristem; this signaling pathway requires CRN and CLV2. The sequence is that of CLAVATA3/ESR (CLE)-related protein 8 from Arabidopsis thaliana (Mouse-ear cress).